The following is a 622-amino-acid chain: ABC transporter permease protein YxdM (622 aa).

Helical transmembrane passes span 20–40 (AFFL…MFLF), 56–76 (GLTA…LYSV), 118–138 (AGII…AYIL), 154–174 (ITAC…ILFV), 195–215 (PSVL…GMVL), 219–239 (VHGA…YFFF), 279–299 (LFFI…VLAM), 498–518 (TVQL…VFFV), 558–578 (IQLA…TLFA), and 590–610 (VAGP…LFFL).

This sequence belongs to the ABC-4 integral membrane protein family. In terms of assembly, the complex is composed of two ATP-binding proteins (YxdL) and two transmembrane proteins (YxdM).

Its subcellular location is the cell membrane. Its function is as follows. Part of the ABC transporter complex YxdLM which could be involved in peptide resistance. In Bacillus subtilis (strain 168), this protein is ABC transporter permease protein YxdM (yxdM).